Consider the following 150-residue polypeptide: Ribonuclease H (150 aa).

An RNase H type-1 domain is found at 1–141 (MRPVIIHTDG…ADQLARDGLT (141 aa)). 4 residues coordinate Mg(2+): aspartate 9, glutamate 47, aspartate 69, and aspartate 133.

It belongs to the RNase H family. As to quaternary structure, monomer. Mg(2+) is required as a cofactor.

The protein resides in the cytoplasm. It carries out the reaction Endonucleolytic cleavage to 5'-phosphomonoester.. Its function is as follows. Endonuclease that specifically degrades the RNA of RNA-DNA hybrids. The chain is Ribonuclease H from Rhodopseudomonas palustris (strain BisB5).